The sequence spans 166 residues: Cold-inducible RNA-binding protein B (166 aa).

Residues 5–83 form the RRM domain; that stretch reads GKLFIGGLNF…RQIRVDQAGK (79 aa). A disordered region spans residues 68-166; sequence GKAVDGRQIR…DSYDSYATHE (99 aa). The span at 92–115 shows a compositional bias: gly residues; it reads YRGGSSGGRGFFRGGRGRGGGDRG. Residues 133-149 are compositionally biased toward low complexity; that stretch reads GSRDYYSSGRSQGSYGD. Residues 157–166 are compositionally biased toward basic and acidic residues; the sequence is DSYDSYATHE.

In terms of assembly, interacts with prmt1. Interacts with elavl1/elrA (via RRM3). Associates with ribosomes. Post-translationally, methylated on arginine residues within RGG motifs. Methylation by prmt1 promotes cytoplasmic accumulation. In terms of tissue distribution, in adults, most abundant in testis, ovary, brain and liver, with lower expression in kidney and heart.

It localises to the nucleus. The protein localises to the nucleoplasm. It is found in the cytoplasm. In terms of biological role, cold-inducible mRNA binding protein. Acts cooperatively with elavl1/elrA to stabilize AU-rich element (ARE)-containing mRNAs by binding to them and inhibiting their deadenylation. Essential for embryonic gastrulation and neural development, acting to maintain the expression of a set of adhesion molecules, and cell movement during embryogenesis. Required for pronephros development. In Xenopus laevis (African clawed frog), this protein is Cold-inducible RNA-binding protein B (cirbp-b).